The following is a 480-amino-acid chain: Chromosomal replication initiator protein DnaA (480 aa).

Residues Met-1–Phe-71 are domain I, interacts with DnaA modulators. The tract at residues Phe-71 to Ser-139 is domain II. The disordered stretch occupies residues Ser-91–Gly-115. Over residues Ala-97–Ala-108 the composition is skewed to basic and acidic residues. Positions Met-140–Ala-356 are domain III, AAA+ region. Residues Gly-184, Gly-186, Lys-187, and Thr-188 each contribute to the ATP site. Positions Gln-357 to Val-480 are domain IV, binds dsDNA.

It belongs to the DnaA family. As to quaternary structure, oligomerizes as a right-handed, spiral filament on DNA at oriC.

The protein resides in the cytoplasm. Its function is as follows. Plays an essential role in the initiation and regulation of chromosomal replication. ATP-DnaA binds to the origin of replication (oriC) to initiate formation of the DNA replication initiation complex once per cell cycle. Binds the DnaA box (a 9 base pair repeat at the origin) and separates the double-stranded (ds)DNA. Forms a right-handed helical filament on oriC DNA; dsDNA binds to the exterior of the filament while single-stranded (ss)DNA is stabiized in the filament's interior. The ATP-DnaA-oriC complex binds and stabilizes one strand of the AT-rich DNA unwinding element (DUE), permitting loading of DNA polymerase. After initiation quickly degrades to an ADP-DnaA complex that is not apt for DNA replication. Binds acidic phospholipids. The sequence is that of Chromosomal replication initiator protein DnaA from Roseiflexus castenholzii (strain DSM 13941 / HLO8).